The sequence spans 287 residues: Bifunctional protein FolD (287 aa).

Residues Gly-168–Ser-170, Ser-193, and Ile-234 each bind NADP(+).

It belongs to the tetrahydrofolate dehydrogenase/cyclohydrolase family. As to quaternary structure, homodimer.

It catalyses the reaction (6R)-5,10-methylene-5,6,7,8-tetrahydrofolate + NADP(+) = (6R)-5,10-methenyltetrahydrofolate + NADPH. The enzyme catalyses (6R)-5,10-methenyltetrahydrofolate + H2O = (6R)-10-formyltetrahydrofolate + H(+). The protein operates within one-carbon metabolism; tetrahydrofolate interconversion. Catalyzes the oxidation of 5,10-methylenetetrahydrofolate to 5,10-methenyltetrahydrofolate and then the hydrolysis of 5,10-methenyltetrahydrofolate to 10-formyltetrahydrofolate. This chain is Bifunctional protein FolD, found in Clostridioides difficile (strain 630) (Peptoclostridium difficile).